Consider the following 155-residue polypeptide: Large ribosomal subunit protein bL9c (155 aa).

The protein belongs to the bacterial ribosomal protein bL9 family.

It localises to the plastid. Its subcellular location is the chloroplast. Functionally, binds to the 23S rRNA. This chain is Large ribosomal subunit protein bL9c, found in Porphyra purpurea (Red seaweed).